A 1521-amino-acid polypeptide reads, in one-letter code: Suppressor of Ty 6 homolog (1521 aa).

Positions 1–238 are disordered; that stretch reads MDFIDNQAEE…EEIIEDDGEG (238 aa). Residues 26-41 show a composition bias toward basic residues; sequence KKMKMAKEKSKRKKKM. Residues 26–42 carry the Nuclear localization signal motif; that stretch reads KKMKMAKEKSKRKKKMV. Acidic residues-rich tracts occupy residues 45-56 and 67-76; these read SDEDEDDDDDEE and ADDDDEEEDA. Residues 77 to 89 are compositionally biased toward basic and acidic residues; it reads KSEKSEKSRHSGE. The segment covering 90–99 has biased composition (acidic residues); sequence DELDDEDLDL. Residues 126–157 are compositionally biased toward basic and acidic residues; the sequence is PIRRPNHEDDDLLSERGSDDGDRRKDRGRGDR. 3 stretches are compositionally biased toward acidic residues: residues 166 to 176, 191 to 200, and 209 to 238; these read RSEDDFIEDDG, NLPEGAEDDA, and FNLD…DGEG. The S1 motif domain occupies 1183 to 1252; that stretch reads LGDSRQGGCP…ERFSLFLSCK (70 aa). Residues 1300–1389 form the SH2 domain; it reads HPNFHNVSYE…IARFVQPMIQ (90 aa).

It belongs to the SPT6 family. In terms of assembly, interacts with glp-1 and lin-12. As to expression, abundant in embryos, and less abundant in larvae.

The protein resides in the nucleus. Histone H3-H4 chaperone that plays a role in maintenance of chromatin structure during RNA polymerase II transcription elongation. Required for several aspects of morphogenesis of C.elegans, including regulation of division in the germline and gut and specification of ventral-uterine precursor cell fate. In Caenorhabditis elegans, this protein is Suppressor of Ty 6 homolog (emb-5).